Reading from the N-terminus, the 705-residue chain is Elongation factor G (705 aa).

In terms of domain architecture, tr-type G spans 8–294; sequence NLYRNFGIMA…AVIDYLPSPL (287 aa). Residues 17–24, 92–96, and 146–149 contribute to the GTP site; these read AHIDAGKT, DTPGH, and NKMD.

The protein belongs to the TRAFAC class translation factor GTPase superfamily. Classic translation factor GTPase family. EF-G/EF-2 subfamily.

It is found in the cytoplasm. Its function is as follows. Catalyzes the GTP-dependent ribosomal translocation step during translation elongation. During this step, the ribosome changes from the pre-translocational (PRE) to the post-translocational (POST) state as the newly formed A-site-bound peptidyl-tRNA and P-site-bound deacylated tRNA move to the P and E sites, respectively. Catalyzes the coordinated movement of the two tRNA molecules, the mRNA and conformational changes in the ribosome. The polypeptide is Elongation factor G (Ruegeria pomeroyi (strain ATCC 700808 / DSM 15171 / DSS-3) (Silicibacter pomeroyi)).